The following is a 692-amino-acid chain: Elongation factor G (692 aa).

The tr-type G domain maps to 8–282 (EKTRNIGIMA…AVLDYLPAPT (275 aa)). GTP is bound by residues 17–24 (AHIDAGKT), 81–85 (DTPGH), and 135–138 (NKMD). Ser213, Ser302, Ser569, and Ser680 each carry phosphoserine.

Belongs to the TRAFAC class translation factor GTPase superfamily. Classic translation factor GTPase family. EF-G/EF-2 subfamily. Post-translationally, phosphorylated on threonine residue(s). Phosphorylated by PrkC and dephosphorylated by PrpC, in vitro.

The protein resides in the cytoplasm. Functionally, catalyzes the GTP-dependent ribosomal translocation step during translation elongation. During this step, the ribosome changes from the pre-translocational (PRE) to the post-translocational (POST) state as the newly formed A-site-bound peptidyl-tRNA and P-site-bound deacylated tRNA move to the P and E sites, respectively. Catalyzes the coordinated movement of the two tRNA molecules, the mRNA and conformational changes in the ribosome. This Bacillus subtilis (strain 168) protein is Elongation factor G (fusA).